The sequence spans 174 residues: MALDNATVLERLRAALPDAILGSAEFRGDLSVYVRPERIVDVARFLRDDPELRFNFLENLCGVDYLGREPRFEVVYHLISFTNRSRICLKVGVDEHNPSVPSLTGLWPGANYHERETFDMFGIIFTGHPCLERILMPEDWEGHPLRKDVPLGAEEVAFTFNQDRIYAHKPFAKE.

The protein belongs to the complex I 30 kDa subunit family. As to quaternary structure, NDH-1 is composed of 14 different subunits. Subunits NuoB, C, D, E, F, and G constitute the peripheral sector of the complex.

The protein resides in the cell membrane. It catalyses the reaction a quinone + NADH + 5 H(+)(in) = a quinol + NAD(+) + 4 H(+)(out). Functionally, NDH-1 shuttles electrons from NADH, via FMN and iron-sulfur (Fe-S) centers, to quinones in the respiratory chain. The immediate electron acceptor for the enzyme in this species is believed to be ubiquinone. Couples the redox reaction to proton translocation (for every two electrons transferred, four hydrogen ions are translocated across the cytoplasmic membrane), and thus conserves the redox energy in a proton gradient. This chain is NADH-quinone oxidoreductase subunit C, found in Roseiflexus sp. (strain RS-1).